A 313-amino-acid polypeptide reads, in one-letter code: tRNA dimethylallyltransferase (313 aa).

17–24 (GPTASGKT) lines the ATP pocket. Substrate is bound at residue 19-24 (TASGKT). Interaction with substrate tRNA stretches follow at residues 42–45 (DSAL), 166–170 (QRLSR), and 247–252 (RCVGYR).

It belongs to the IPP transferase family. As to quaternary structure, monomer. Requires Mg(2+) as cofactor.

The enzyme catalyses adenosine(37) in tRNA + dimethylallyl diphosphate = N(6)-dimethylallyladenosine(37) in tRNA + diphosphate. Its function is as follows. Catalyzes the transfer of a dimethylallyl group onto the adenine at position 37 in tRNAs that read codons beginning with uridine, leading to the formation of N6-(dimethylallyl)adenosine (i(6)A). This is tRNA dimethylallyltransferase from Serratia proteamaculans (strain 568).